A 225-amino-acid polypeptide reads, in one-letter code: Uridylate kinase (225 aa).

Position 9-10 (9-10 (GS)) interacts with ATP. Gly-46 is a binding site for UMP. Residues Gly-47 and Arg-51 each coordinate ATP. Residues Asp-67 and 115-121 (THPAHTT) contribute to the UMP site. Positions 141, 142, 147, and 150 each coordinate ATP.

Belongs to the UMP kinase family. In terms of assembly, homohexamer.

It is found in the cytoplasm. The catalysed reaction is UMP + ATP = UDP + ADP. It participates in pyrimidine metabolism; CTP biosynthesis via de novo pathway; UDP from UMP (UMPK route): step 1/1. With respect to regulation, inhibited by UTP. In terms of biological role, catalyzes the reversible phosphorylation of UMP to UDP. In Methanococcus maripaludis (strain DSM 14266 / JCM 13030 / NBRC 101832 / S2 / LL), this protein is Uridylate kinase.